Reading from the N-terminus, the 277-residue chain is Large ribosomal subunit protein uL2 (277 aa).

The tract at residues 225-277 (MNPIDHPHGGGEGKTAAGRHPVSPWGTPSKGFRTRVNKRTDGMIVRRRYSNKG) is disordered.

This sequence belongs to the universal ribosomal protein uL2 family. Part of the 50S ribosomal subunit. Forms a bridge to the 30S subunit in the 70S ribosome.

Its function is as follows. One of the primary rRNA binding proteins. Required for association of the 30S and 50S subunits to form the 70S ribosome, for tRNA binding and peptide bond formation. It has been suggested to have peptidyltransferase activity; this is somewhat controversial. Makes several contacts with the 16S rRNA in the 70S ribosome. This Nitrosospira multiformis (strain ATCC 25196 / NCIMB 11849 / C 71) protein is Large ribosomal subunit protein uL2.